Consider the following 290-residue polypeptide: Ribosomal RNA small subunit methyltransferase A (290 aa).

The S-adenosyl-L-methionine site is built by N27, L29, G54, E75, D100, and N125.

It belongs to the class I-like SAM-binding methyltransferase superfamily. rRNA adenine N(6)-methyltransferase family. RsmA subfamily.

The protein localises to the cytoplasm. The enzyme catalyses adenosine(1518)/adenosine(1519) in 16S rRNA + 4 S-adenosyl-L-methionine = N(6)-dimethyladenosine(1518)/N(6)-dimethyladenosine(1519) in 16S rRNA + 4 S-adenosyl-L-homocysteine + 4 H(+). Functionally, specifically dimethylates two adjacent adenosines (A1518 and A1519) in the loop of a conserved hairpin near the 3'-end of 16S rRNA in the 30S particle. May play a critical role in biogenesis of 30S subunits. This chain is Ribosomal RNA small subunit methyltransferase A, found in Streptococcus uberis (strain ATCC BAA-854 / 0140J).